The chain runs to 188 residues: Protein GrpE (188 aa).

Belongs to the GrpE family. Homodimer.

Its subcellular location is the cytoplasm. Its function is as follows. Participates actively in the response to hyperosmotic and heat shock by preventing the aggregation of stress-denatured proteins, in association with DnaK and GrpE. It is the nucleotide exchange factor for DnaK and may function as a thermosensor. Unfolded proteins bind initially to DnaJ; upon interaction with the DnaJ-bound protein, DnaK hydrolyzes its bound ATP, resulting in the formation of a stable complex. GrpE releases ADP from DnaK; ATP binding to DnaK triggers the release of the substrate protein, thus completing the reaction cycle. Several rounds of ATP-dependent interactions between DnaJ, DnaK and GrpE are required for fully efficient folding. The protein is Protein GrpE of Chromobacterium violaceum (strain ATCC 12472 / DSM 30191 / JCM 1249 / CCUG 213 / NBRC 12614 / NCIMB 9131 / NCTC 9757 / MK).